The following is a 281-amino-acid chain: Glutamate racemase (281 aa).

Substrate-binding positions include 10 to 11 (DS) and 42 to 43 (YG). Cys-74 functions as the Proton donor/acceptor in the catalytic mechanism. 75-76 (NT) lines the substrate pocket. Cys-190 (proton donor/acceptor) is an active-site residue. 191 to 192 (TH) provides a ligand contact to substrate.

Belongs to the aspartate/glutamate racemases family.

It catalyses the reaction L-glutamate = D-glutamate. Its pathway is cell wall biogenesis; peptidoglycan biosynthesis. Functionally, provides the (R)-glutamate required for cell wall biosynthesis. The chain is Glutamate racemase from Oenococcus oeni (strain ATCC BAA-331 / PSU-1).